A 315-amino-acid chain; its full sequence is Ectopic P granules protein 4 (315 aa).

A run of 6 helical transmembrane segments spans residues 84–104 (IGFL…FSFF), 113–133 (IGYI…ALWF), 146–166 (LPPP…ISAL), 190–210 (IVYL…FFDG), 221–241 (IFES…LACS), and 242–262 (ISSN…FFII).

Belongs to the EI24 family. Expressed in pharyngeal and body wall muscles and intestine cells.

It localises to the cytoplasm. Its subcellular location is the membrane. Functionally, involved in autophagy. Thought to act in autophagasome and omegasome formation. The polypeptide is Ectopic P granules protein 4 (Caenorhabditis elegans).